The chain runs to 330 residues: T-cell leukemia homeobox protein 1 (330 aa).

The interval aspartate 186–serine 207 is disordered. Residues lysine 201 to threonine 260 constitute a DNA-binding region (homeobox). Lysine 236 carries the post-translational modification N6-acetyllysine.

As to quaternary structure, interacts with MEIS1, MEIS2, PBX1, PBX2 and PBX3.

The protein localises to the nucleus. Controls the genesis of the spleen. Binds to the DNA sequence 5'-GGCGGTAAGTGG-3'. This Homo sapiens (Human) protein is T-cell leukemia homeobox protein 1 (TLX1).